A 202-amino-acid polypeptide reads, in one-letter code: Pyridoxal 5'-phosphate synthase subunit PdxT (202 aa).

Gly-49 to Ser-51 contributes to the L-glutamine binding site. The active-site Nucleophile is Cys-81. L-glutamine contacts are provided by residues Arg-110 and Ile-139–Arg-140. Catalysis depends on charge relay system residues His-182 and Glu-184.

The protein belongs to the glutaminase PdxT/SNO family. In terms of assembly, in the presence of PdxS, forms a dodecamer of heterodimers. Only shows activity in the heterodimer.

The enzyme catalyses aldehydo-D-ribose 5-phosphate + D-glyceraldehyde 3-phosphate + L-glutamine = pyridoxal 5'-phosphate + L-glutamate + phosphate + 3 H2O + H(+). The catalysed reaction is L-glutamine + H2O = L-glutamate + NH4(+). Its pathway is cofactor biosynthesis; pyridoxal 5'-phosphate biosynthesis. In terms of biological role, catalyzes the hydrolysis of glutamine to glutamate and ammonia as part of the biosynthesis of pyridoxal 5'-phosphate. The resulting ammonia molecule is channeled to the active site of PdxS. The polypeptide is Pyridoxal 5'-phosphate synthase subunit PdxT (Rhodococcus jostii (strain RHA1)).